A 276-amino-acid chain; its full sequence is NH(3)-dependent NAD(+) synthetase (276 aa).

ATP is bound at residue 43–50 (GISGGVDS). Residue Asp-49 coordinates Mg(2+). Position 146 (Arg-146) interacts with deamido-NAD(+). An ATP-binding site is contributed by Thr-166. Residue Glu-171 coordinates Mg(2+). 2 residues coordinate deamido-NAD(+): Lys-179 and Asp-186. ATP is bound by residues Lys-195 and Thr-217. 266 to 267 (HK) is a binding site for deamido-NAD(+).

Belongs to the NAD synthetase family. As to quaternary structure, homodimer.

The catalysed reaction is deamido-NAD(+) + NH4(+) + ATP = AMP + diphosphate + NAD(+) + H(+). It functions in the pathway cofactor biosynthesis; NAD(+) biosynthesis; NAD(+) from deamido-NAD(+) (ammonia route): step 1/1. In terms of biological role, catalyzes the ATP-dependent amidation of deamido-NAD to form NAD. Uses ammonia as a nitrogen source. This Shewanella pealeana (strain ATCC 700345 / ANG-SQ1) protein is NH(3)-dependent NAD(+) synthetase.